Consider the following 357-residue polypeptide: THUMP domain-containing protein 1 (357 aa).

Positions 1 to 10 (MAARIQQSPQ) are enriched in polar residues. Disordered stretches follow at residues 1-38 (MAAR…GPRQ) and 74-95 (GPEK…DDDV). A2 is modified (N-acetylalanine). A phosphoserine mark is found at S8, S86, S88, and S119. The THUMP domain occupies 147-254 (DIYKTKKKKT…KAVCCLSVVK (108 aa)). The residue at position 270 (S270) is a Phosphoserine. Polar residues-rich tracts occupy residues 276 to 287 (QLNPKQAAQTGN) and 298 to 315 (KSSQ…QVVP). The interval 276–357 (QLNPKQAAQT…EGSESNENDL (82 aa)) is disordered.

The protein belongs to the THUMPD1 family. Interacts with NAT10. Binds tRNA.

Functions as a tRNA-binding adapter to mediate NAT10-dependent tRNA acetylation modifying cytidine to N4-acetylcytidine (ac4C). This chain is THUMP domain-containing protein 1 (THUMPD1), found in Bos taurus (Bovine).